A 217-amino-acid chain; its full sequence is uncharacterized protein (217 aa).

The first 24 residues, 1 to 24 (MRYTVLIALQGALLLLLLIDDGQG), serve as a signal peptide directing secretion.

This is an uncharacterized protein from Aedes vexans (Inland floodwater mosquito).